Here is a 487-residue protein sequence, read N- to C-terminus: Glutamyl-tRNA(Gln) amidotransferase subunit A (487 aa).

Active-site charge relay system residues include K77 and S152. S176 functions as the Acyl-ester intermediate in the catalytic mechanism.

Belongs to the amidase family. GatA subfamily. Heterotrimer of A, B and C subunits.

The catalysed reaction is L-glutamyl-tRNA(Gln) + L-glutamine + ATP + H2O = L-glutaminyl-tRNA(Gln) + L-glutamate + ADP + phosphate + H(+). Allows the formation of correctly charged Gln-tRNA(Gln) through the transamidation of misacylated Glu-tRNA(Gln) in organisms which lack glutaminyl-tRNA synthetase. The reaction takes place in the presence of glutamine and ATP through an activated gamma-phospho-Glu-tRNA(Gln). The protein is Glutamyl-tRNA(Gln) amidotransferase subunit A of Ligilactobacillus salivarius (strain UCC118) (Lactobacillus salivarius).